The chain runs to 706 residues: Phosphatase and actin regulator 4 (706 aa).

An RPEL 1 repeat occupies 42–67; the sequence is EVLERKISMRKPREELVKRGLLVEVP. Disordered stretches follow at residues 65–123, 196–380, 385–404, and 459–579; these read EVPE…QPCA, VHPR…HIPV, VPML…QSAS, and LKVP…REEW. Polar residues predominate over residues 106 to 121; it reads DSTGSRPKSGETTVQP. Positions 200-211 are enriched in basic and acidic residues; it reads HLSEKNSEKYRP. The span at 266 to 276 shows a compositional bias: polar residues; sequence DPSTRQQSSVP. Residues 290-299 show a composition bias toward pro residues; that stretch reads KQPPVPPPKP. 3 stretches are compositionally biased toward acidic residues: residues 463 to 476, 508 to 523, and 531 to 541; these read DDDD…DESL, QEEE…DTDS, and EDDEEEEEEET. A compositionally biased stretch (basic and acidic residues) spans 563 to 579; the sequence is GPHDSNPEFPQRSREEW. RPEL repeat units lie at residues 588-613 and 625-650; these read SQLN…QKNE and RRLT…RFNE.

Belongs to the phosphatase and actin regulator family. As to quaternary structure, binds ppp1ca and actin.

It is found in the cytoplasm. It localises to the cell projection. Its subcellular location is the lamellipodium. Regulator of protein phosphatase 1 (PP1) required for neural tube and optic fissure closure, and enteric neural crest cell (ENCCs) migration during development. Acts as an activator of PP1. During neural tube closure, localizes to the ventral neural tube and activates PP1, leading to down-regulate cell proliferation within cranial neural tissue and the neural retina. Also acts as a regulator of migration of enteric neural crest cells (ENCCs) by activating PP1, leading to repression of the integrin signaling through the rho/rock pathway. This Xenopus tropicalis (Western clawed frog) protein is Phosphatase and actin regulator 4 (phactr4).